Here is a 216-residue protein sequence, read N- to C-terminus: ATP phosphoribosyltransferase (216 aa).

The protein belongs to the ATP phosphoribosyltransferase family. Short subfamily. As to quaternary structure, heteromultimer composed of HisG and HisZ subunits.

It is found in the cytoplasm. The enzyme catalyses 1-(5-phospho-beta-D-ribosyl)-ATP + diphosphate = 5-phospho-alpha-D-ribose 1-diphosphate + ATP. Its pathway is amino-acid biosynthesis; L-histidine biosynthesis; L-histidine from 5-phospho-alpha-D-ribose 1-diphosphate: step 1/9. Functionally, catalyzes the condensation of ATP and 5-phosphoribose 1-diphosphate to form N'-(5'-phosphoribosyl)-ATP (PR-ATP). Has a crucial role in the pathway because the rate of histidine biosynthesis seems to be controlled primarily by regulation of HisG enzymatic activity. This is ATP phosphoribosyltransferase from Lachnospira eligens (strain ATCC 27750 / DSM 3376 / VPI C15-48 / C15-B4) (Eubacterium eligens).